The sequence spans 187 residues: Mitochondrial intermembrane space import and assembly protein 40 (187 aa).

A mitochondrion-targeting transit peptide spans 1–24 (MFRPASRALLRAPAVARGPASRRL). At 25–43 (ISTAPAESKPRSWKNTAVR) the chain is on the mitochondrial matrix side. The chain crosses the membrane as a helical; Signal-anchor for type II membrane protein span at residues 44-61 (LGLAAGAIYYYNTSNVFA). The Mitochondrial intermembrane portion of the chain corresponds to 62–187 (ENPSFSLNNQ…MDCIEKFKCV (126 aa)). Residues 73–115 (KKNSAEEPLPTLDSIKPRIREERESAAPKPNAEQAPAQELPFG) are disordered. Basic and acidic residues predominate over residues 87–98 (IKPRIREERESA). 2 disulfides stabilise this stretch: cysteine 146–cysteine 148 and cysteine 167–cysteine 180. The 34-residue stretch at 154-187 (HGPCGEEFKAAFSCFVYSEEEPKGMDCIEKFKCV) folds into the CHCH domain. Positions 157–167 (CGEEFKAAFSC) match the Cx9C motif motif.

Monomer. Requires Cu(2+) as cofactor. Zn(2+) is required as a cofactor.

It is found in the mitochondrion inner membrane. Required for the import and folding of small cysteine-containing proteins (small Tim) in the mitochondrial intermembrane space (IMS). Forms a redox cycle with ERV1 that involves a disulfide relay system. Precursor proteins to be imported into the IMS are translocated in their reduced form into the mitochondria. The oxidized form of MIA40 forms a transient intermolecular disulfide bridge with the reduced precursor protein, resulting in oxidation of the precursor protein that now contains an intramolecular disulfide bond and is able to undergo folding in the IMS. This chain is Mitochondrial intermembrane space import and assembly protein 40 (mia40), found in Aspergillus oryzae (strain ATCC 42149 / RIB 40) (Yellow koji mold).